The sequence spans 217 residues: Variable small protein 22 (217 aa).

An N-terminal signal peptide occupies residues 1–18 (MRKRISAIIMTLFMVFMS). C19 carries N-palmitoyl cysteine lipidation. C19 is lipidated: S-diacylglycerol cysteine. Positions 151-174 (LGKNDASDDDTKKAIKKDNSDKTK) are disordered. The segment covering 155-174 (DASDDDTKKAIKKDNSDKTK) has biased composition (basic and acidic residues).

It belongs to the variable small protein (Vsp) family.

It localises to the cell outer membrane. Functionally, the Vlp and Vsp proteins are antigenically distinct proteins, only one vlp or vsp gene is transcriptionally active at any one time. Switching between these genes is a mechanism of host immune response evasion. The polypeptide is Variable small protein 22 (Borrelia hermsii).